Consider the following 90-residue polypeptide: UPF0237 protein NMA1909 (90 aa).

One can recognise an ACT domain in the interval 5–83 (VITVIGKDRV…LDIRMQNEEI (79 aa)).

Belongs to the UPF0237 family.

The chain is UPF0237 protein NMA1909 from Neisseria meningitidis serogroup A / serotype 4A (strain DSM 15465 / Z2491).